Here is a 623-residue protein sequence, read N- to C-terminus: Chaperone protein HtpG (623 aa).

Residues 1 to 336 (MVSKQQTMGF…ASDLPLNISR (336 aa)) form an a; substrate-binding region. The b stretch occupies residues 337–550 (EILQDNKQVE…EQDMGLEMQR (214 aa)). Residues 551–623 (ILQAAGQQVP…NRVNRLLVSS (73 aa)) form a c region.

Belongs to the heat shock protein 90 family. In terms of assembly, homodimer.

It is found in the cytoplasm. In terms of biological role, molecular chaperone. Has ATPase activity. The protein is Chaperone protein HtpG of Legionella pneumophila (strain Paris).